The sequence spans 59 residues: uncharacterized protein (59 aa).

This is an uncharacterized protein from Bacillus subtilis (strain 168).